We begin with the raw amino-acid sequence, 525 residues long: GMP synthase [glutamine-hydrolyzing] (525 aa).

Residues 16-205 (PVLVVDFGAQ…LHDFAGLGAQ (190 aa)) form the Glutamine amidotransferase type-1 domain. Cys93 (nucleophile) is an active-site residue. Catalysis depends on residues His179 and Glu181. The region spanning 206–399 (WTPANIANAL…LGLPEEIVAR (194 aa)) is the GMPS ATP-PPase domain. Residue 233 to 239 (SGGVDSA) coordinates ATP.

As to quaternary structure, homodimer.

It carries out the reaction XMP + L-glutamine + ATP + H2O = GMP + L-glutamate + AMP + diphosphate + 2 H(+). It functions in the pathway purine metabolism; GMP biosynthesis; GMP from XMP (L-Gln route): step 1/1. Its function is as follows. Catalyzes the synthesis of GMP from XMP. The protein is GMP synthase [glutamine-hydrolyzing] of Mycobacterium bovis (strain BCG / Pasteur 1173P2).